We begin with the raw amino-acid sequence, 202 residues long: Urease accessory protein UreG (202 aa).

GTP is bound at residue 11–18 (GPVGSGKT).

Belongs to the SIMIBI class G3E GTPase family. UreG subfamily. Homodimer. UreD, UreF and UreG form a complex that acts as a GTP-hydrolysis-dependent molecular chaperone, activating the urease apoprotein by helping to assemble the nickel containing metallocenter of UreC. The UreE protein probably delivers the nickel.

Its subcellular location is the cytoplasm. Functionally, facilitates the functional incorporation of the urease nickel metallocenter. This process requires GTP hydrolysis, probably effectuated by UreG. This is Urease accessory protein UreG from Magnetococcus marinus (strain ATCC BAA-1437 / JCM 17883 / MC-1).